Here is a 368-residue protein sequence, read N- to C-terminus: Chaperone protein DnaJ (368 aa).

The J domain occupies 5–65 (DYYEVLGLTK…QKKARYDQFG (61 aa)). The CR-type zinc finger occupies 125 to 207 (GKETEIEIPK…CRGEGKVQKR (83 aa)). Residues Cys138, Cys141, Cys155, Cys158, Cys181, Cys184, Cys195, and Cys198 each coordinate Zn(2+). 4 CXXCXGXG motif repeats span residues 138–145 (CETCHGSG), 155–162 (CSTCNGAG), 181–188 (CTTCHGTG), and 195–202 (CSTCRGEG).

It belongs to the DnaJ family. Homodimer. It depends on Zn(2+) as a cofactor.

It localises to the cytoplasm. Participates actively in the response to hyperosmotic and heat shock by preventing the aggregation of stress-denatured proteins and by disaggregating proteins, also in an autonomous, DnaK-independent fashion. Unfolded proteins bind initially to DnaJ; upon interaction with the DnaJ-bound protein, DnaK hydrolyzes its bound ATP, resulting in the formation of a stable complex. GrpE releases ADP from DnaK; ATP binding to DnaK triggers the release of the substrate protein, thus completing the reaction cycle. Several rounds of ATP-dependent interactions between DnaJ, DnaK and GrpE are required for fully efficient folding. Also involved, together with DnaK and GrpE, in the DNA replication of plasmids through activation of initiation proteins. In Lysinibacillus sphaericus (Bacillus sphaericus), this protein is Chaperone protein DnaJ.